A 228-amino-acid chain; its full sequence is Cytochrome c oxidase subunit 2 (228 aa).

The Mitochondrial intermembrane segment spans residues 1–26; the sequence is MTTWANMNLQDSASPIMEQLIYFHDH. Residues 27 to 48 traverse the membrane as a helical segment; it reads ALMIIIMILMVVSYMMIAMVFN. The Mitochondrial matrix segment spans residues 49-62; that stretch reads KYINRFLLEGQMIE. Residues 63 to 82 traverse the membrane as a helical segment; that stretch reads LAWTIAPAVILIFIAVPSLR. At 83–228 the chain is on the mitochondrial intermembrane side; it reads LLYLMDEINT…FINWILKMNM (146 aa). The Cu cation site is built by His161, Cys196, Glu198, Cys200, His204, and Met207. Position 198 (Glu198) interacts with Mg(2+).

The protein belongs to the cytochrome c oxidase subunit 2 family. Component of the cytochrome c oxidase (complex IV, CIV), a multisubunit enzyme composed of a catalytic core of 3 subunits and several supernumerary subunits. The complex exists as a monomer or a dimer and forms supercomplexes (SCs) in the inner mitochondrial membrane with ubiquinol-cytochrome c oxidoreductase (cytochrome b-c1 complex, complex III, CIII). Requires Cu cation as cofactor.

It localises to the mitochondrion inner membrane. The catalysed reaction is 4 Fe(II)-[cytochrome c] + O2 + 8 H(+)(in) = 4 Fe(III)-[cytochrome c] + 2 H2O + 4 H(+)(out). Its function is as follows. Component of the cytochrome c oxidase, the last enzyme in the mitochondrial electron transport chain which drives oxidative phosphorylation. The respiratory chain contains 3 multisubunit complexes succinate dehydrogenase (complex II, CII), ubiquinol-cytochrome c oxidoreductase (cytochrome b-c1 complex, complex III, CIII) and cytochrome c oxidase (complex IV, CIV), that cooperate to transfer electrons derived from NADH and succinate to molecular oxygen, creating an electrochemical gradient over the inner membrane that drives transmembrane transport and the ATP synthase. Cytochrome c oxidase is the component of the respiratory chain that catalyzes the reduction of oxygen to water. Electrons originating from reduced cytochrome c in the intermembrane space (IMS) are transferred via the dinuclear copper A center (CU(A)) of subunit 2 and heme A of subunit 1 to the active site in subunit 1, a binuclear center (BNC) formed by heme A3 and copper B (CU(B)). The BNC reduces molecular oxygen to 2 water molecules using 4 electrons from cytochrome c in the IMS and 4 protons from the mitochondrial matrix. The sequence is that of Cytochrome c oxidase subunit 2 (COII) from Periplaneta americana (American cockroach).